Here is a 281-residue protein sequence, read N- to C-terminus: uncharacterized protein (281 aa).

Positions 11 to 30 (PLGHKKEKPPPVSPPSPPPI) are disordered. Positions 20–30 (PPVSPPSPPPI) are enriched in pro residues. Helical transmembrane passes span 58-78 (TVVF…LIPW), 88-107 (TLPF…AYWL), 117-137 (MLVM…GLCF), 145-165 (AYVL…LMAW), 171-191 (LAIL…IAVQ), 196-216 (YQRI…IVLI), and 248-268 (VIMF…PNYA).

This sequence belongs to the cytomegalovirus US12 family.

Its subcellular location is the membrane. This is an uncharacterized protein from Human cytomegalovirus (strain AD169) (HHV-5).